The following is a 198-amino-acid chain: Large ribosomal subunit protein bL25 (198 aa).

The protein belongs to the bacterial ribosomal protein bL25 family. CTC subfamily. Part of the 50S ribosomal subunit; part of the 5S rRNA/L5/L18/L25 subcomplex. Contacts the 5S rRNA. Binds to the 5S rRNA independently of L5 and L18.

This is one of the proteins that binds to the 5S RNA in the ribosome where it forms part of the central protuberance. This Streptomyces coelicolor (strain ATCC BAA-471 / A3(2) / M145) protein is Large ribosomal subunit protein bL25.